The following is a 185-amino-acid chain: Ribosome-recycling factor (185 aa).

The protein belongs to the RRF family.

The protein localises to the cytoplasm. Responsible for the release of ribosomes from messenger RNA at the termination of protein biosynthesis. May increase the efficiency of translation by recycling ribosomes from one round of translation to another. This chain is Ribosome-recycling factor, found in Streptococcus suis (strain 98HAH33).